The primary structure comprises 150 residues: Transthyretin (150 aa).

The first 20 residues, 1–20, serve as a signal peptide directing secretion; sequence MASYRLLLLCLAGLVFVSEA. Cysteine 30 carries the post-translational modification Sulfocysteine. L-thyroxine is bound at residue lysine 35. At glutamate 62 the chain carries 4-carboxyglutamate. Glutamate 74 contributes to the L-thyroxine binding site. An N-linked (GlcNAc...) asparagine glycan is attached at asparagine 118. Serine 137 contributes to the L-thyroxine binding site.

Belongs to the transthyretin family. Homotetramer. Dimer of dimers. In the homotetramer, subunits assemble around a central channel that can accommodate two ligand molecules. Interacts with RBP4. Post-translationally, sulfonation of the reactive cysteine Cys-30 enhances the stability of the native conformation of TTR, avoiding misassembly of the protein leading to amyloid formation. Detected in plasma and cerebrospinal fluid (at protein level). Highly expressed in the choroid plexus. Detected in liver.

The protein localises to the secreted. Functionally, thyroid hormone-binding protein. Probably transports thyroxine from the bloodstream to the brain. This is Transthyretin (TTR) from Sus scrofa (Pig).